A 347-amino-acid polypeptide reads, in one-letter code: tRNA N6-adenosine threonylcarbamoyltransferase (347 aa).

Positions 115 and 119 each coordinate Fe cation. Residues 137–141 (LASGG), D170, G183, and N281 each bind substrate. D309 serves as a coordination point for Fe cation.

Belongs to the KAE1 / TsaD family. Fe(2+) serves as cofactor.

It localises to the cytoplasm. It catalyses the reaction L-threonylcarbamoyladenylate + adenosine(37) in tRNA = N(6)-L-threonylcarbamoyladenosine(37) in tRNA + AMP + H(+). Functionally, required for the formation of a threonylcarbamoyl group on adenosine at position 37 (t(6)A37) in tRNAs that read codons beginning with adenine. Is involved in the transfer of the threonylcarbamoyl moiety of threonylcarbamoyl-AMP (TC-AMP) to the N6 group of A37, together with TsaE and TsaB. TsaD likely plays a direct catalytic role in this reaction. This is tRNA N6-adenosine threonylcarbamoyltransferase from Methylorubrum extorquens (strain CM4 / NCIMB 13688) (Methylobacterium extorquens).